The following is a 344-amino-acid chain: Methylthioribose-1-phosphate isomerase (344 aa).

Substrate is bound by residues 46–48 (RGA), Arg89, and Gln196. Asp237 serves as the catalytic Proton donor. 247–248 (NK) contacts substrate.

This sequence belongs to the eIF-2B alpha/beta/delta subunits family. MtnA subfamily.

It catalyses the reaction 5-(methylsulfanyl)-alpha-D-ribose 1-phosphate = 5-(methylsulfanyl)-D-ribulose 1-phosphate. It participates in amino-acid biosynthesis; L-methionine biosynthesis via salvage pathway; L-methionine from S-methyl-5-thio-alpha-D-ribose 1-phosphate: step 1/6. Catalyzes the interconversion of methylthioribose-1-phosphate (MTR-1-P) into methylthioribulose-1-phosphate (MTRu-1-P). This chain is Methylthioribose-1-phosphate isomerase, found in Syntrophotalea carbinolica (strain DSM 2380 / NBRC 103641 / GraBd1) (Pelobacter carbinolicus).